A 637-amino-acid chain; its full sequence is Probable membrane transporter protein MamO (637 aa).

Residues M1–K24 are Cytoplasmic-facing. The chain crosses the membrane as a helical span at residues T25–L45. Residues D46–D352 lie on the Lumenal side of the membrane. The tract at residues L78–V268 is protease-like. H148 and H263 together coordinate a divalent metal cation. The chain crosses the membrane as a helical span at residues I353 to G373. Positions M370–V637 are TSUP-like. At G374–Q378 the chain is on the cytoplasmic side. The chain crosses the membrane as a helical span at residues V379–L399. Residues T400–Q416 lie on the Lumenal side of the membrane. A helical membrane pass occupies residues L417–G437. Residue Y438 is a topological domain, cytoplasmic. The chain crosses the membrane as a helical span at residues F439–I459. The Lumenal portion of the chain corresponds to M460–S517. A helical transmembrane segment spans residues A518–I538. Over E539 to A554 the chain is Cytoplasmic. Residues I555–L575 traverse the membrane as a helical segment. The Lumenal portion of the chain corresponds to H576–E586. A helical membrane pass occupies residues A587–A607. Topologically, residues R608–R616 are cytoplasmic. Residues V617–V637 form a helical membrane-spanning segment.

The protein in the N-terminal section; belongs to the peptidase S1C family. This sequence in the C-terminal section; belongs to the 4-toluene sulfonate uptake permease (TSUP) (TC 2.A.102) family. A metal cation serves as cofactor. Post-translationally, subject to proteolytic cleavage by MamE.

Its subcellular location is the magnetosome membrane. In terms of biological role, plays 2 roles; promotes magnetite nucleation/formation and activates the MamE protease. Despite its near conservation of a protease-like sequence, this is probably not a protease. Required in conjunction with MamP for proteolysis of at least MamE, itself and MamP. May transport a solute that controls MamE's protease activity. May place individual iron atoms into the magnetite lattice. The protein is Probable membrane transporter protein MamO (mamO) of Paramagnetospirillum magneticum (strain ATCC 700264 / AMB-1) (Magnetospirillum magneticum).